The chain runs to 249 residues: Protein YIP5 (249 aa).

5 helical membrane passes run 87-107 (LYGP…SNSI), 131-151 (ASII…ILVW), 164-184 (LYGY…PFGL), 188-208 (LASH…SIVF), and 228-248 (LLFG…LIFF).

It belongs to the YIP1 family. Interacts with the YIP1 family members yip1 and yip4, and several Rab GTPases. The C-terminal cysteines in the Rab GTPase ypt2 are essential for the interaction. Interacts with snx3.

The protein resides in the membrane. Possible role in vesicle-mediated transport. May be involved in proper membrane localization of Rab GTPases. This is Protein YIP5 from Schizosaccharomyces pombe (strain 972 / ATCC 24843) (Fission yeast).